A 1733-amino-acid polypeptide reads, in one-letter code: Protein NETWORKED 1D (1733 aa).

One can recognise an NAB domain in the interval 12–92 (YSWWWDSHIS…ERYDHATGVI (81 aa)). Coiled-coil stretches lie at residues 195-816 (KEIN…RESS), 897-931 (LIAENQDIKEASKLLEKLVSELEEENIGKQVQIDS), 960-1043 (DENS…QKLI), and 1196-1386 (ARSA…NDLM). Residues 1456-1476 (LKTSSARRSRRRNGSLRKQNH) are disordered. Basic residues predominate over residues 1460–1470 (SARRSRRRNGS). 2 coiled-coil regions span residues 1553–1627 (ANKR…KVQN) and 1653–1686 (SEQARRGSEKIGRLQLEIQRLQFLLLKLEGDRED). Residues 1628 to 1656 (GFERSDGSKSSMDLDENESSRRRRISEQA) form a disordered region.

This sequence belongs to the NET family.

Plant-specific actin binding protein. May be part of a membrane-cytoskeletal adapter complex. The chain is Protein NETWORKED 1D from Arabidopsis thaliana (Mouse-ear cress).